Consider the following 194-residue polypeptide: MKTFELEGKGREIVARSADQKRALKAMRKNNEIPAVLYGGEKVTHFTVTKEAVRKLVYTPEIFVVELSIDGNKTMAIVKDMQFQPVTDEILHMDFLEVSKDKAVVMEVPVVLEGHAEGVKAGGKLSLQMRKLKVKAIYDQIPEKLTINVDHLGLGKTMQVGALHFEGLELMNAKNAVVCAVQLTRAARGAQAKG.

The protein belongs to the bacterial ribosomal protein bL25 family. CTC subfamily. As to quaternary structure, part of the 50S ribosomal subunit; part of the 5S rRNA/L5/L18/L25 subcomplex. Contacts the 5S rRNA. Binds to the 5S rRNA independently of L5 and L18.

Functionally, this is one of the proteins that binds to the 5S RNA in the ribosome where it forms part of the central protuberance. The polypeptide is Large ribosomal subunit protein bL25 (Parabacteroides distasonis (strain ATCC 8503 / DSM 20701 / CIP 104284 / JCM 5825 / NCTC 11152)).